The following is a 403-amino-acid chain: Glucose-signaling factor 2 (403 aa).

The Lumenal portion of the chain corresponds to 1-177 (MEIYIRLNAD…QEVQANYSSL (177 aa)). N-linked (GlcNAc...) asparagine glycans are attached at residues Asn-89 and Asn-173. Residues 178-198 (VAQWLFFVMHIFKVGIITLFL) traverse the membrane as a helical; Signal-anchor for type II membrane protein segment. The Cytoplasmic portion of the chain corresponds to 199–403 (KLGIANPISF…IKKNDLKKSN (205 aa)). Residues 330 to 388 (ELENNLKKILEEYDGDIGKMNAEIRRFRRFGIYEPDEKLASLVKLRREIADEKEKASNN) adopt a coiled-coil conformation.

The protein localises to the endoplasmic reticulum membrane. In terms of biological role, may be involved in the secretion of hexose transporters from the endoplasmic reticulum. Involved in secretion of GAL2 and HXT1. The sequence is that of Glucose-signaling factor 2 (GSF2) from Saccharomyces cerevisiae (strain ATCC 204508 / S288c) (Baker's yeast).